A 398-amino-acid chain; its full sequence is 1-deoxy-D-xylulose 5-phosphate reductoisomerase (398 aa).

6 residues coordinate NADPH: Thr10, Gly11, Ser12, Ile13, Asn38, and Asn124. Lys125 provides a ligand contact to 1-deoxy-D-xylulose 5-phosphate. Glu126 contributes to the NADPH binding site. Asp150 contributes to the Mn(2+) binding site. Positions 151, 152, 176, and 199 each coordinate 1-deoxy-D-xylulose 5-phosphate. Glu152 is a binding site for Mn(2+). Gly205 lines the NADPH pocket. 1-deoxy-D-xylulose 5-phosphate contacts are provided by Ser212, Asn217, Lys218, and Glu221. Glu221 contributes to the Mn(2+) binding site.

Belongs to the DXR family. Requires Mg(2+) as cofactor. Mn(2+) serves as cofactor.

It catalyses the reaction 2-C-methyl-D-erythritol 4-phosphate + NADP(+) = 1-deoxy-D-xylulose 5-phosphate + NADPH + H(+). Its pathway is isoprenoid biosynthesis; isopentenyl diphosphate biosynthesis via DXP pathway; isopentenyl diphosphate from 1-deoxy-D-xylulose 5-phosphate: step 1/6. Its function is as follows. Catalyzes the NADPH-dependent rearrangement and reduction of 1-deoxy-D-xylulose-5-phosphate (DXP) to 2-C-methyl-D-erythritol 4-phosphate (MEP). The polypeptide is 1-deoxy-D-xylulose 5-phosphate reductoisomerase (Crocosphaera subtropica (strain ATCC 51142 / BH68) (Cyanothece sp. (strain ATCC 51142))).